Consider the following 317-residue polypeptide: MKVLWAALLVTFLAGCQAKVEQPVEPETEPELRQQAEGQSGQPWELALGRFWDYLRWVQTLSEQVQEELLSPQVTQELTTLMDETMKELKAYKSELEEQLSPVAEETRARLSKELQAAQARLGADMEDVRSRLVQYRSEVQAMLGQSTEELRARLASHLRKLRKRLLRDADDLQKRLAVYQAGAREGAERGVSAIRERLGPLVEQGRVRAATVGSLASQPLQERAQALGERLRARMEEMGSRTRDRLDEVKEQVAEVRAKLEEQAQQISLQAEAFQARLKSWFEPLVEDMQRQWAGLVEKVQAAVGASTAPVPIDNH.

The first 18 residues, 1–18 (MKVLWAALLVTFLAGCQA), serve as a signal peptide directing secretion. 8 repeat units span residues 80–101 (TLMD…EQLS), 102–123 (PVAE…ARLG), 124–145 (ADME…AMLG), 146–167 (QSTE…KRLL), 168–189 (RDAD…EGAE), 190–211 (RGVS…VRAA), 212–233 (TVGS…ERLR), and 234–255 (ARME…EQVA). The 8 X 22 AA approximate tandem repeats stretch occupies residues 80–255 (TLMDETMKEL…RLDEVKEQVA (176 aa)). Met-143 is modified (methionine sulfoxide). Residue Ser-147 is modified to Phosphoserine. The segment at 158–168 (HLRKLRKRLLR) is LDL and other lipoprotein receptors binding. 162–165 (LRKR) is a binding site for heparin. The segment at 210 to 290 (AATVGSLASQ…SWFEPLVEDM (81 aa)) is lipid-binding and lipoprotein association. 229–236 (GERLRARM) lines the heparin pocket. The tract at residues 266-317 (QQISLQAEAFQARLKSWFEPLVEDMQRQWAGLVEKVQAAVGASTAPVPIDNH) is homooligomerization. A specificity for association with VLDL region spans residues 278–290 (RLKSWFEPLVEDM).

The protein belongs to the apolipoprotein A1/A4/E family. As to quaternary structure, homotetramer. May interact with ABCA1; functionally associated with ABCA1 in the biogenesis of HDLs. May interact with APP/A4 amyloid-beta peptide; the interaction is extremely stable in vitro but its physiological significance is unclear. May interact with MAPT. May interact with MAP2. In the cerebrospinal fluid, interacts with secreted SORL1. Interacts with PMEL; this allows the loading of PMEL luminal fragment on ILVs to induce fibril nucleation. APOE exists as multiple glycosylated and sialylated glycoforms within cells and in plasma. The extent of glycosylation and sialylation are tissue and context specific. Post-translationally, glycated in plasma VLDL. In terms of processing, phosphorylated by FAM20C in the extracellular medium.

It is found in the secreted. The protein localises to the extracellular space. It localises to the extracellular matrix. Its subcellular location is the extracellular vesicle. The protein resides in the endosome. It is found in the multivesicular body. APOE is an apolipoprotein, a protein associating with lipid particles, that mainly functions in lipoprotein-mediated lipid transport between organs via the plasma and interstitial fluids. APOE is a core component of plasma lipoproteins and is involved in their production, conversion and clearance. Apolipoproteins are amphipathic molecules that interact both with lipids of the lipoprotein particle core and the aqueous environment of the plasma. As such, APOE associates with chylomicrons, chylomicron remnants, very low density lipoproteins (VLDL) and intermediate density lipoproteins (IDL) but shows a preferential binding to high-density lipoproteins (HDL). It also binds a wide range of cellular receptors including the LDL receptor/LDLR, the LDL receptor-related proteins LRP1, LRP2 and LRP8 and the very low-density lipoprotein receptor/VLDLR that mediate the cellular uptake of the APOE-containing lipoprotein particles. Finally, APOE also has a heparin-binding activity and binds heparan-sulfate proteoglycans on the surface of cells, a property that supports the capture and the receptor-mediated uptake of APOE-containing lipoproteins by cells. A main function of APOE is to mediate lipoprotein clearance through the uptake of chylomicrons, VLDLs, and HDLs by hepatocytes. APOE is also involved in the biosynthesis by the liver of VLDLs as well as their uptake by peripheral tissues ensuring the delivery of triglycerides and energy storage in muscle, heart and adipose tissues. By participating in the lipoprotein-mediated distribution of lipids among tissues, APOE plays a critical role in plasma and tissues lipid homeostasis. APOE is also involved in two steps of reverse cholesterol transport, the HDLs-mediated transport of cholesterol from peripheral tissues to the liver, and thereby plays an important role in cholesterol homeostasis. First, it is functionally associated with ABCA1 in the biogenesis of HDLs in tissues. Second, it is enriched in circulating HDLs and mediates their uptake by hepatocytes. APOE also plays an important role in lipid transport in the central nervous system, regulating neuron survival and sprouting. This is Apolipoprotein E (APOE) from Macaca fascicularis (Crab-eating macaque).